The sequence spans 620 residues: Proline--tRNA ligase (620 aa).

It belongs to the class-II aminoacyl-tRNA synthetase family. ProS type 1 subfamily. Homodimer.

Its subcellular location is the cytoplasm. The catalysed reaction is tRNA(Pro) + L-proline + ATP = L-prolyl-tRNA(Pro) + AMP + diphosphate. In terms of biological role, catalyzes the attachment of proline to tRNA(Pro) in a two-step reaction: proline is first activated by ATP to form Pro-AMP and then transferred to the acceptor end of tRNA(Pro). As ProRS can inadvertently accommodate and process non-cognate amino acids such as alanine and cysteine, to avoid such errors it has two additional distinct editing activities against alanine. One activity is designated as 'pretransfer' editing and involves the tRNA(Pro)-independent hydrolysis of activated Ala-AMP. The other activity is designated 'posttransfer' editing and involves deacylation of mischarged Ala-tRNA(Pro). The misacylated Cys-tRNA(Pro) is not edited by ProRS. This chain is Proline--tRNA ligase, found in Streptococcus thermophilus (strain CNRZ 1066).